A 208-amino-acid chain; its full sequence is Ribosomal RNA small subunit methyltransferase G (208 aa).

S-adenosyl-L-methionine is bound by residues G73, L78, 124-125 (VE), and R139.

The protein belongs to the methyltransferase superfamily. RNA methyltransferase RsmG family.

The protein localises to the cytoplasm. It catalyses the reaction guanosine(527) in 16S rRNA + S-adenosyl-L-methionine = N(7)-methylguanosine(527) in 16S rRNA + S-adenosyl-L-homocysteine. Specifically methylates the N7 position of guanine in position 527 of 16S rRNA. The sequence is that of Ribosomal RNA small subunit methyltransferase G from Aeromonas salmonicida (strain A449).